The following is a 232-amino-acid chain: Ion-translocating oxidoreductase complex subunit E (232 aa).

A run of 6 helical transmembrane segments spans residues 18–38 (GLVQLLGLCPLLAVTATLTNA), 39–59 (LGLGVATMLVLIGSNILVSLV), 69–89 (IPVFVMIIAALVTAVQLLINA), 93–113 (GLYLSLGIFLPLIVTNCIIIG), 127–147 (AAFDGLMMGLGFTLVLAVLGA), and 182–202 (PFLLAMLPPGAFIVMGLLIAL).

This sequence belongs to the NqrDE/RnfAE family. In terms of assembly, the complex is composed of six subunits: RnfA, RnfB, RnfC, RnfD, RnfE and RnfG.

It is found in the cell inner membrane. Part of a membrane-bound complex that couples electron transfer with translocation of ions across the membrane. The polypeptide is Ion-translocating oxidoreductase complex subunit E (Shewanella sp. (strain MR-4)).